The sequence spans 164 residues: UPF0304 protein YfbU (164 aa).

This sequence belongs to the UPF0304 family.

The sequence is that of UPF0304 protein YfbU from Salmonella enteritidis PT4 (strain P125109).